The chain runs to 327 residues: Aspartate--ammonia ligase (327 aa).

The protein belongs to the class-II aminoacyl-tRNA synthetase family. AsnA subfamily.

The protein resides in the cytoplasm. The enzyme catalyses L-aspartate + NH4(+) + ATP = L-asparagine + AMP + diphosphate + H(+). It functions in the pathway amino-acid biosynthesis; L-asparagine biosynthesis; L-asparagine from L-aspartate (ammonia route): step 1/1. This chain is Aspartate--ammonia ligase, found in Bacillus cereus (strain B4264).